Reading from the N-terminus, the 119-residue chain is Protein FATTY ACID EXPORT 5 (119 aa).

The next 3 helical transmembrane spans lie at 27-47 (SIAS…AGFI), 57-77 (TSLL…FVMG), and 85-105 (KIMP…FYVY).

This sequence belongs to the TMEM14 family.

Its subcellular location is the membrane. May be involved in free fatty acids export. This is Protein FATTY ACID EXPORT 5 from Arabidopsis thaliana (Mouse-ear cress).